The following is a 356-amino-acid chain: Cytochrome b translation regulator cbp7 (356 aa).

In terms of assembly, component of a complex, at least composed of cbp7 and cbp8.

The protein localises to the mitochondrion. Its function is as follows. Translation factor for cob1/cytochrome b; plays a role in cob1 mRNA stabilization and required for correct folding of the protein. The protein is Cytochrome b translation regulator cbp7 of Schizosaccharomyces pombe (strain 972 / ATCC 24843) (Fission yeast).